Here is a 638-residue protein sequence, read N- to C-terminus: MHLSELTHPNQLHGLSIAQLTQIAAQIRDKHLETVAATGGHLGPGLGVVELTLALYQTLDLEKDRVVWDVGHQAYPHKMLTGRYNNFHTLRQKGGIAGYLNRRESPFDHFGAGHASTSISAALGMAIARDLKGENFKVVAIIGDGALTGGMALEAINHAGHLPHTNLMVVLNDNEMSISPNVGAIPRYLNKIRLSPQVQFITDNLEEQFKHIPFFGENLTPEMQRLKEGMKRLAVPKVGAVFEELGFTYVGPVDGHNLEELIATFQHAHTIPGPVLVHVATVKGKGYAIAEKDQVGYHAQNPFDLVTGKAKPSSKPKPPSYSKVFGETLTKLAENDPRIVGITAAMATGTGLDILQKRVPKQYIDVGIAEQHAVTMAAGMATQGMRPVAAIYSTFLQRAYDQIVHDVCIQKLPVFFCMDRAGIVGADGPTHQGMYDIAYLRCLPNMVLMAPKDEAELQRMIVTGINYTDGPIALRYPRGNGYGVALMEEGWEPLEIGKGELLRSGEDLLLVAYGSMVYPAMQVAEILKEHGMSAAVINARFAKPLDTELILPLAKQIGRVVTLEEGCLMGGFGSAVLEALQEADILVPVLRLGVPDILVEHASPDESKADLGLTPPQMAETIMQKFGVPQRATVVTAS.

Thiamine diphosphate contacts are provided by residues His72 and 113–115 (GHA). Position 144 (Asp144) interacts with Mg(2+). Thiamine diphosphate is bound by residues 145-146 (GA), Asn174, Tyr287, and Glu370. Asn174 provides a ligand contact to Mg(2+).

This sequence belongs to the transketolase family. DXPS subfamily. Homodimer. It depends on Mg(2+) as a cofactor. Requires thiamine diphosphate as cofactor.

The catalysed reaction is D-glyceraldehyde 3-phosphate + pyruvate + H(+) = 1-deoxy-D-xylulose 5-phosphate + CO2. It functions in the pathway metabolic intermediate biosynthesis; 1-deoxy-D-xylulose 5-phosphate biosynthesis; 1-deoxy-D-xylulose 5-phosphate from D-glyceraldehyde 3-phosphate and pyruvate: step 1/1. Catalyzes the acyloin condensation reaction between C atoms 2 and 3 of pyruvate and glyceraldehyde 3-phosphate to yield 1-deoxy-D-xylulose-5-phosphate (DXP). In Thermosynechococcus vestitus (strain NIES-2133 / IAM M-273 / BP-1), this protein is 1-deoxy-D-xylulose-5-phosphate synthase.